The chain runs to 405 residues: L-rhamnonate dehydratase (405 aa).

2 residues coordinate substrate: histidine 33 and arginine 59. The Mg(2+) site is built by aspartate 226, glutamate 252, and glutamate 280. Histidine 329 functions as the Proton acceptor in the catalytic mechanism. Residue glutamate 349 participates in substrate binding.

It belongs to the mandelate racemase/muconate lactonizing enzyme family. RhamD subfamily. As to quaternary structure, homooctamer; tetramer of dimers. It depends on Mg(2+) as a cofactor.

It carries out the reaction L-rhamnonate = 2-dehydro-3-deoxy-L-rhamnonate + H2O. Catalyzes the dehydration of L-rhamnonate to 2-keto-3-deoxy-L-rhamnonate (KDR). This Escherichia coli O127:H6 (strain E2348/69 / EPEC) protein is L-rhamnonate dehydratase.